Here is a 621-residue protein sequence, read N- to C-terminus: Cyclic nucleotide-gated ion channel 11 (621 aa).

At 1–43 the chain is on the cytoplasmic side; sequence MNLQRRKFVRLDSTGVDGKLKSVRGRLKKVYGKMKTLENWRKT. A helical transmembrane segment spans residues 44–64; that stretch reads VLLACVVALAIDPLFLFIPLI. The Extracellular segment spans residues 65–76; the sequence is DSQRFCFTFDKT. A helical transmembrane segment spans residues 77–97; it reads LVAVVCVIRTFIDTFYVIHII. The Cytoplasmic segment spans residues 98-128; that stretch reads YYLITETIAPRSQASLRGEIVVHSKATLKTR. A helical transmembrane segment spans residues 129 to 149; it reads LLFHFIVDIISVLPIPQVVVL. Residues 150–162 lie on the Extracellular side of the membrane; that stretch reads TLIPLSASLVSER. The helical transmembrane segment at 163 to 183 threads the bilayer; it reads ILKWIILSQYVPRIIRMYPLY. Residues 184-198 lie on the Cytoplasmic side of the membrane; that stretch reads KEVTRAFGTVAESKR. The chain crosses the membrane as a helical span at residues 199–219; it reads VGAALNFFLYMLHSYVCGAFW. At 220–329 the chain is on the extracellular side; the sequence is YLSSIERKST…QNLETSNSAG (110 aa). A helical transmembrane segment spans residues 330 to 350; sequence EIFFAIIICVSGLLLFAVLIG. At 351 to 621 the chain is on the cytoplasmic side; the sequence is NVQKYLQSST…KLNLGAAIYA (271 aa). A nucleoside 3',5'-cyclic phosphate is bound by residues 435–556 and aspartate 506; that span reads LLQA…HSKQ. The calmodulin-binding stretch occupies residues 549-564; it reads YRRLHSKQLQHMFRFY. Residues 569 to 598 form the IQ domain; it reads QTWAACFIQAAWKRHCRRKLSKALREEEGK.

Belongs to the cyclic nucleotide-gated cation channel (TC 1.A.1.5) family. As to quaternary structure, homotetramer or heterotetramer.

It is found in the cell membrane. Its function is as follows. Putative cyclic nucleotide-gated ion channel. This Arabidopsis thaliana (Mouse-ear cress) protein is Cyclic nucleotide-gated ion channel 11 (CNGC11).